A 113-amino-acid polypeptide reads, in one-letter code: UPF0122 protein LCA_0713 (113 aa).

The protein belongs to the UPF0122 family.

In terms of biological role, might take part in the signal recognition particle (SRP) pathway. This is inferred from the conservation of its genetic proximity to ftsY/ffh. May be a regulatory protein. The sequence is that of UPF0122 protein LCA_0713 from Latilactobacillus sakei subsp. sakei (strain 23K) (Lactobacillus sakei subsp. sakei).